A 594-amino-acid polypeptide reads, in one-letter code: Fidgetin-like protein 1 (594 aa).

Disordered stretches follow at residues 1 to 79 (MYSP…DDEL) and 239 to 261 (QSIG…KRCS). Polar residues predominate over residues 56–73 (PSDSAQQQPPFKSRSQQN). ATP contacts are provided by residues Ala319 and 359 to 364 (GTGKTM).

This sequence belongs to the AAA ATPase family. Hexamer. Mg(2+) serves as cofactor. Expressed in germ cells.

It is found in the nucleus. The enzyme catalyses ATP + H2O = ADP + phosphate + H(+). Its function is as follows. Has a role in spindle assembly which acts in the progression through mitosis during embryogenesis. Required for fertility. The polypeptide is Fidgetin-like protein 1 (figl-1) (Caenorhabditis elegans).